Here is a 513-residue protein sequence, read N- to C-terminus: ATP synthase subunit alpha 1 (513 aa).

169-176 (GDRQTGKT) serves as a coordination point for ATP.

Belongs to the ATPase alpha/beta chains family. In terms of assembly, F-type ATPases have 2 components, CF(1) - the catalytic core - and CF(0) - the membrane proton channel. CF(1) has five subunits: alpha(3), beta(3), gamma(1), delta(1), epsilon(1). CF(0) has three main subunits: a(1), b(2) and c(9-12). The alpha and beta chains form an alternating ring which encloses part of the gamma chain. CF(1) is attached to CF(0) by a central stalk formed by the gamma and epsilon chains, while a peripheral stalk is formed by the delta and b chains.

The protein localises to the cell inner membrane. It carries out the reaction ATP + H2O + 4 H(+)(in) = ADP + phosphate + 5 H(+)(out). In terms of biological role, produces ATP from ADP in the presence of a proton gradient across the membrane. The alpha chain is a regulatory subunit. This Nitrosomonas eutropha (strain DSM 101675 / C91 / Nm57) protein is ATP synthase subunit alpha 1.